A 609-amino-acid polypeptide reads, in one-letter code: Glutamine--fructose-6-phosphate aminotransferase [isomerizing] (609 aa).

Cysteine 2 functions as the Nucleophile; for GATase activity in the catalytic mechanism. In terms of domain architecture, Glutamine amidotransferase type-2 spans 2-218 (CGIVGAVAQR…EGDVVEVTRR (217 aa)). SIS domains lie at 286-426 (ADAL…LKGA) and 458-599 (LAEG…VDQP). Lysine 604 functions as the For Fru-6P isomerization activity in the catalytic mechanism.

In terms of assembly, homodimer.

Its subcellular location is the cytoplasm. It carries out the reaction D-fructose 6-phosphate + L-glutamine = D-glucosamine 6-phosphate + L-glutamate. In terms of biological role, catalyzes the first step in hexosamine metabolism, converting fructose-6P into glucosamine-6P using glutamine as a nitrogen source. The chain is Glutamine--fructose-6-phosphate aminotransferase [isomerizing] from Yersinia pestis.